Here is a 122-residue protein sequence, read N- to C-terminus: MIQQETRLKVADNSGAREVLTIKVLGGSGRKTANIGDVIVCTVKNATPGGVVKKGEVVKAVVVRTKSGVRRKDGSYIKFDENACVVIRDDKSPRGTRIFGPVARELRDNNYMKIISLAPEVL.

It belongs to the universal ribosomal protein uL14 family. In terms of assembly, part of the 50S ribosomal subunit. Forms a cluster with proteins L3 and L19. In the 70S ribosome, L14 and L19 interact and together make contacts with the 16S rRNA in bridges B5 and B8.

Functionally, binds to 23S rRNA. Forms part of two intersubunit bridges in the 70S ribosome. This Staphylococcus carnosus (strain TM300) protein is Large ribosomal subunit protein uL14.